Here is a 315-residue protein sequence, read N- to C-terminus: MQIKLANPRGFCAGVDRAIEIVNRALEVFGPPIYVRHEVVHNKFVVEDLRNRGAIFVEELDQVPDDVIVIFSAHGVSQAVRQEAAGRGLKVFDATCPLVTKVHIEVAKYSRDGRECILIGHEGHPEVEGTMGQYDASNGGAIYLVEDEEDVANLQVRDPDHLAFVTQTTLSMDDTSRVIDALRARFPNIGGPRKDDICYATQNRQDAVKQLAGESDVVLVVGSPNSSNSNRLRELAERMGTPAYLIDGAEDLQRGWFDQAARIGITAGASAPEVLVRGVIEQLKAWGATGAEELDGREENITFSMPKELRVRSLI.

C12 is a binding site for [4Fe-4S] cluster. The (2E)-4-hydroxy-3-methylbut-2-enyl diphosphate site is built by H41 and H74. H41 and H74 together coordinate dimethylallyl diphosphate. H41 and H74 together coordinate isopentenyl diphosphate. C96 contacts [4Fe-4S] cluster. A (2E)-4-hydroxy-3-methylbut-2-enyl diphosphate-binding site is contributed by H124. H124 is a dimethylallyl diphosphate binding site. Position 124 (H124) interacts with isopentenyl diphosphate. The Proton donor role is filled by E126. T168 serves as a coordination point for (2E)-4-hydroxy-3-methylbut-2-enyl diphosphate. C198 contacts [4Fe-4S] cluster. Residues S226, S227, N228, and S270 each contribute to the (2E)-4-hydroxy-3-methylbut-2-enyl diphosphate site. 4 residues coordinate dimethylallyl diphosphate: S226, S227, N228, and S270. S226, S227, N228, and S270 together coordinate isopentenyl diphosphate.

The protein belongs to the IspH family. The cofactor is [4Fe-4S] cluster.

The catalysed reaction is isopentenyl diphosphate + 2 oxidized [2Fe-2S]-[ferredoxin] + H2O = (2E)-4-hydroxy-3-methylbut-2-enyl diphosphate + 2 reduced [2Fe-2S]-[ferredoxin] + 2 H(+). It carries out the reaction dimethylallyl diphosphate + 2 oxidized [2Fe-2S]-[ferredoxin] + H2O = (2E)-4-hydroxy-3-methylbut-2-enyl diphosphate + 2 reduced [2Fe-2S]-[ferredoxin] + 2 H(+). It participates in isoprenoid biosynthesis; dimethylallyl diphosphate biosynthesis; dimethylallyl diphosphate from (2E)-4-hydroxy-3-methylbutenyl diphosphate: step 1/1. The protein operates within isoprenoid biosynthesis; isopentenyl diphosphate biosynthesis via DXP pathway; isopentenyl diphosphate from 1-deoxy-D-xylulose 5-phosphate: step 6/6. In terms of biological role, catalyzes the conversion of 1-hydroxy-2-methyl-2-(E)-butenyl 4-diphosphate (HMBPP) into a mixture of isopentenyl diphosphate (IPP) and dimethylallyl diphosphate (DMAPP). Acts in the terminal step of the DOXP/MEP pathway for isoprenoid precursor biosynthesis. The chain is 4-hydroxy-3-methylbut-2-enyl diphosphate reductase from Pseudomonas putida (strain GB-1).